The following is a 458-amino-acid chain: Hyaluronidase conohyal-P1 (458 aa).

An N-terminal signal peptide occupies residues methionine 1–alanine 18. The interval histidine 24–cysteine 47 is disordered. Low complexity predominate over residues serine 28–serine 43. Residues cysteine 68 and cysteine 342 are joined by a disulfide bond. Residues asparagine 106 and asparagine 141 are each glycosylated (N-linked (GlcNAc...) asparagine). Glutamate 151 functions as the Proton donor in the catalytic mechanism. Residues asparagine 261, asparagine 337, and asparagine 359 are each glycosylated (N-linked (GlcNAc...) asparagine). The EGF-like domain occupies valine 363–glutamine 434. 3 disulfide bridges follow: cysteine 367-cysteine 378, cysteine 372-cysteine 411, and cysteine 413-cysteine 422.

Belongs to the glycosyl hydrolase 56 family. In terms of tissue distribution, expressed by the venom duct.

The protein resides in the secreted. The catalysed reaction is Random hydrolysis of (1-&gt;4)-linkages between N-acetyl-beta-D-glucosamine and D-glucuronate residues in hyaluronate.. Hyaluronidase catalyzes the hydrolysis of hyaluronic acid (HA), an anionic, nonsulfated glycosaminoglycan distributed widely throughout connective, epithelial, and neural tissues. In venom, they are known to enhance diffusion of the venom by degrading the extracellular matrix. This chain is Hyaluronidase conohyal-P1, found in Conus purpurascens (Purple cone).